The chain runs to 96 residues: Myticin-B (96 aa).

Positions 1-20 (MKATMLLAVVVAVFVAGTEA) are cleaved as a signal peptide. A propeptide spans 61-96 (VKFPFGATQDAKSMNELEYTPIMKSMENLDNGMDML) (removed in mature form).

Post-translationally, contains four disulfide bonds. Hemocytes.

It localises to the secreted. In terms of biological role, bacteriolytic activity against Gram-positive bacteria M.luteus, B.megaterium and A.viridans and Gram-negative bacteria E.coli D31. Possesses antifungal activity against F.oxysporum. This is Myticin-B from Mytilus galloprovincialis (Mediterranean mussel).